The sequence spans 216 residues: MAKIQLVAQANLPTEYGIFKMVGFEFPDTKKEHVALVMGDISNADEPVLARIHSECLTGDALHSLKCDCGFQLATALKQIQEEGRGVLIYHREEGRGIGLINKIRAYSLQDKGMDTIEANLALGFKADERNFEVCADMFELLGVKKVRLMTNNPEKVETMKKAGINVVERVPLNVGENRYNTKYLDTKAKKMGHYIVHNNDEQHLMTCPHCQEEII.

51–55 (RIHSE) contributes to the GTP binding site. The Zn(2+) site is built by cysteine 56, cysteine 67, and cysteine 69. Residues glutamine 72, 94-96 (EGR), and threonine 116 each bind GTP. Catalysis depends on aspartate 128, which acts as the Proton acceptor. The Nucleophile role is filled by arginine 130. Residues threonine 151 and lysine 156 each contribute to the GTP site.

Belongs to the GTP cyclohydrolase II family. The cofactor is Zn(2+).

The catalysed reaction is GTP + 4 H2O = 2,5-diamino-6-hydroxy-4-(5-phosphoribosylamino)-pyrimidine + formate + 2 phosphate + 3 H(+). It functions in the pathway cofactor biosynthesis; riboflavin biosynthesis; 5-amino-6-(D-ribitylamino)uracil from GTP: step 1/4. Catalyzes the conversion of GTP to 2,5-diamino-6-ribosylamino-4(3H)-pyrimidinone 5'-phosphate (DARP), formate and pyrophosphate. The sequence is that of GTP cyclohydrolase-2 from Haemophilus influenzae (strain 86-028NP).